The chain runs to 303 residues: 2-(5''-triphosphoribosyl)-3'-dephosphocoenzyme-A synthase (303 aa).

Belongs to the CitG/MdcB family.

The enzyme catalyses 3'-dephospho-CoA + ATP = 2'-(5''-triphospho-alpha-D-ribosyl)-3'-dephospho-CoA + adenine. Functionally, catalyzes the formation of 2-(5''-triphosphoribosyl)-3'-dephosphocoenzyme-A, the precursor of the prosthetic group of the holo-acyl carrier protein (gamma chain) of citrate lyase, from ATP and dephospho-CoA. This Escherichia fergusonii (strain ATCC 35469 / DSM 13698 / CCUG 18766 / IAM 14443 / JCM 21226 / LMG 7866 / NBRC 102419 / NCTC 12128 / CDC 0568-73) protein is 2-(5''-triphosphoribosyl)-3'-dephosphocoenzyme-A synthase.